The chain runs to 405 residues: MLQMPSKQPISAGIVIVAAGRGERAGSPTEGPKQYRPIGGKPVIVHTLENFMTWEPATAIVVVIHPDDEALFAKAFRHIISATPIETVHGGPTRQRSVLAGLRYLKDKHVSHVLIHDAVRPFFDHTLLDRIAENLANGALAVLPAMPVTDTLKRADGAGTVLTTVSREQLFAAQTPQSFAFETILDAHEKAAASGRSDFTDDASIAEWLGIPVTIVEGTGDNVKLTVKKDIAMADDKLSASLLPDVRTGNGYDVHQLEAGDGVTLCGVFIPHDQKLKGHSDADVALHALTDALLATCGAGDIGDHFPPSDPQWKGAASRIFIEHAARIVRERGGTIMNADVSLIAEAPKVGPHREAMRANLSEYLGIDLERCSVKATTNETIGFVGRREGIAAIATATVVYRGRT.

Residues 1 to 246 (MLQMPSKQPI…KLSASLLPDV (246 aa)) form a 2-C-methyl-D-erythritol 4-phosphate cytidylyltransferase region. Positions 247–405 (RTGNGYDVHQ…TATVVYRGRT (159 aa)) are 2-C-methyl-D-erythritol 2,4-cyclodiphosphate synthase. A divalent metal cation is bound by residues aspartate 253 and histidine 255. Residues 253 to 255 (DVH) and 279 to 280 (HS) contribute to the 4-CDP-2-C-methyl-D-erythritol 2-phosphate site. Residue histidine 287 participates in a divalent metal cation binding. 4-CDP-2-C-methyl-D-erythritol 2-phosphate contacts are provided by residues 301-303 (DIG), 377-380 (TTNE), phenylalanine 384, and arginine 387.

In the N-terminal section; belongs to the IspD/TarI cytidylyltransferase family. IspD subfamily. The protein in the C-terminal section; belongs to the IspF family. A divalent metal cation serves as cofactor.

It carries out the reaction 2-C-methyl-D-erythritol 4-phosphate + CTP + H(+) = 4-CDP-2-C-methyl-D-erythritol + diphosphate. The catalysed reaction is 4-CDP-2-C-methyl-D-erythritol 2-phosphate = 2-C-methyl-D-erythritol 2,4-cyclic diphosphate + CMP. Its pathway is isoprenoid biosynthesis; isopentenyl diphosphate biosynthesis via DXP pathway; isopentenyl diphosphate from 1-deoxy-D-xylulose 5-phosphate: step 2/6. The protein operates within isoprenoid biosynthesis; isopentenyl diphosphate biosynthesis via DXP pathway; isopentenyl diphosphate from 1-deoxy-D-xylulose 5-phosphate: step 4/6. Its function is as follows. Bifunctional enzyme that catalyzes the formation of 4-diphosphocytidyl-2-C-methyl-D-erythritol from CTP and 2-C-methyl-D-erythritol 4-phosphate (MEP) (IspD), and catalyzes the conversion of 4-diphosphocytidyl-2-C-methyl-D-erythritol 2-phosphate (CDP-ME2P) to 2-C-methyl-D-erythritol 2,4-cyclodiphosphate (ME-CPP) with a corresponding release of cytidine 5-monophosphate (CMP) (IspF). The polypeptide is Bifunctional enzyme IspD/IspF (Rhizobium etli (strain CIAT 652)).